We begin with the raw amino-acid sequence, 261 residues long: Dienlactone hydrolase 1 (261 aa).

Catalysis depends on residues C147, D194, and H226.

It belongs to the dienelactone hydrolase family.

It participates in xenobiotic degradation. Dienlactone hydrolase; part of the Fusarium detoxification of benzoxazolinone cluster 1 (FDB1) involved in the degradation of benzoxazolinones produced by the host plant. Maize, wheat, and rye produce the 2 benzoxazinone phytoanticipins 2,4-dihy-droxy-7-methoxy-1,4-benzoxazin-3-one (DIMBOA) and 2,4-dihydroxy-1,4-benzoxazin-3-one (DIBOA) that, due to their inherent instability once released, spontaneously degrade to the more stable corresponding benzoxazolinones, 6-methoxy-2-benzoxazolinone (MBOA) and 2-benzoxazolinone (BOA), respectively. The first step in the detoxification of benzoxazolinones involves the hydrolysis of the cyclic ester bond of benzoxazolinones by the FDB1 cluster gamma-lactamase MBL1 to aminophenols. MBL1 is able to convert BOA into 2-aminophenol (2-AP), as well as MBOA into 5-methoxy-2-aminophenol (2-AMP). The FDB2 cluster N-malonyltransferase FDB2/NAT1 then metabolizes aminophenols via N-malonylation to non-toxic malonamic acids. FDB2/NAT1 converts 2-AP into N-(2-hydroxyphenyl) malonamic acid (HPMA) and 2-AMP into N-(2-hydroxy-4-methoxyphenyl) malonamic acid (HMPMA). The duplicated dienlactone hydrolases DLH1 and DLH2 may provide redundant function for hydrolyzing the lactone moiety in the BOA molecule. The roles of the amidases and other enzymes encoded by the 2 FDB clusters have not been identified so far. This Gibberella moniliformis (strain M3125 / FGSC 7600) (Maize ear and stalk rot fungus) protein is Dienlactone hydrolase 1.